Here is a 241-residue protein sequence, read N- to C-terminus: 1-(5-phosphoribosyl)-5-[(5-phosphoribosylamino)methylideneamino] imidazole-4-carboxamide isomerase (241 aa).

Asp-12 acts as the Proton acceptor in catalysis. The active-site Proton donor is the Asp-133.

The protein belongs to the HisA/HisF family.

The protein resides in the cytoplasm. The enzyme catalyses 1-(5-phospho-beta-D-ribosyl)-5-[(5-phospho-beta-D-ribosylamino)methylideneamino]imidazole-4-carboxamide = 5-[(5-phospho-1-deoxy-D-ribulos-1-ylimino)methylamino]-1-(5-phospho-beta-D-ribosyl)imidazole-4-carboxamide. It participates in amino-acid biosynthesis; L-histidine biosynthesis; L-histidine from 5-phospho-alpha-D-ribose 1-diphosphate: step 4/9. This is 1-(5-phosphoribosyl)-5-[(5-phosphoribosylamino)methylideneamino] imidazole-4-carboxamide isomerase from Persephonella marina (strain DSM 14350 / EX-H1).